We begin with the raw amino-acid sequence, 287 residues long: MLDESYESRIIDGKVLAQQVEEEVRSGVEDLESNRGITPGLATILVGDDPASKMYVRLKHRACERVGIRAEDFLLPADSTQEELLALIDSLNNNKDVHGILLQLPLPEHFSPQEAMEAISPAKDADGFHPYNMGKLMIGDEGLVPCTPHGVIRALEEYNVPVKGKNAVIVGHSNVVGKPMAAMLLNRNASVSVCHIFTDDLKKYTLGADILVVAAGVKHLIKADMVKEGAVIFDVGITKEEDGVYGDVDFENVIKKASLITPVPGGVGPLTVAMLMKHVLMCAEKSL.

NADP(+) is bound by residues 171–173, isoleucine 196, and isoleucine 237; that span reads GHS.

This sequence belongs to the tetrahydrofolate dehydrogenase/cyclohydrolase family. As to quaternary structure, homodimer.

It catalyses the reaction (6R)-5,10-methylene-5,6,7,8-tetrahydrofolate + NADP(+) = (6R)-5,10-methenyltetrahydrofolate + NADPH. It carries out the reaction (6R)-5,10-methenyltetrahydrofolate + H2O = (6R)-10-formyltetrahydrofolate + H(+). The protein operates within one-carbon metabolism; tetrahydrofolate interconversion. Catalyzes the oxidation of 5,10-methylenetetrahydrofolate to 5,10-methenyltetrahydrofolate and then the hydrolysis of 5,10-methenyltetrahydrofolate to 10-formyltetrahydrofolate. This Methanosarcina mazei (strain ATCC BAA-159 / DSM 3647 / Goe1 / Go1 / JCM 11833 / OCM 88) (Methanosarcina frisia) protein is Bifunctional protein FolD.